We begin with the raw amino-acid sequence, 427 residues long: Synaptotagmin-A (427 aa).

The Vesicular segment spans residues 1 to 57 (MKLTEAYHDALAALPATPPLPTAVANATEAAAGSEEGKQDGFSKVKVKEKFMNELNK). Asn26 carries an N-linked (GlcNAc...) asparagine glycan. Residues 58-84 (IPLPPWALVAIAIVAIILGLTCCFCIC) form a helical membrane-spanning segment. Residues 85-427 (KKCLLKKKNK…EVDATLGMKK (343 aa)) lie on the Cytoplasmic side of the membrane. Residues 96–145 (KGKEKGGKNAMTMKDVKEMGKSGKEQALKDEDEDAETGLTTDGKEEEKED) are disordered. Residues 109-124 (KDVKEMGKSGKEQALK) show a composition bias toward basic and acidic residues. The tract at residues 141 to 387 (EEKEDEKLGK…AIGKVFVGYN (247 aa)) is phospholipid binding. 2 C2 domains span residues 147-266 (KLGK…EEWR) and 278-411 (KLGD…AQWH). Leu177, Asp178, Asp184, Asp236, Phe237, Asp238, Ser241, Lys242, Asp244, Asp309, Asp315, Asp369, Asp371, and Asp377 together coordinate Ca(2+).

It belongs to the synaptotagmin family. In terms of assembly, homodimer or homotrimer (possible). The cofactor is Ca(2+). As to expression, forebrain, cerebellum and neuroendocrine cells.

Its subcellular location is the cytoplasmic vesicle. It localises to the secretory vesicle. It is found in the synaptic vesicle membrane. The protein resides in the synapse. Its function is as follows. May have a regulatory role in the membrane interactions during trafficking of synaptic vesicles at the active zone of the synapse. It binds acidic phospholipids with a specificity that requires the presence of both an acidic head group and a diacyl backbone. In Diplobatis ommata (Ocellated electric ray), this protein is Synaptotagmin-A (P65-A).